Consider the following 20-residue polypeptide: Cytochrome c oxidase subunit 5B heart, mitochondrial (20 aa).

Residues 1–20 are disordered; sequence XXLKGIPTDEEQATGLEEYA.

It belongs to the cytochrome c oxidase subunit 5B family. As to quaternary structure, component of the cytochrome c oxidase (complex IV, CIV), a multisubunit enzyme composed of 14 subunits. The complex is composed of a catalytic core of 3 subunits MT-CO1, MT-CO2 and MT-CO3, encoded in the mitochondrial DNA, and 11 supernumerary subunits COX4I, COX5A, COX5B, COX6A, COX6B, COX6C, COX7A, COX7B, COX7C, COX8 and NDUFA4, which are encoded in the nuclear genome. The complex exists as a monomer or a dimer and forms supercomplexes (SCs) in the inner mitochondrial membrane with NADH-ubiquinone oxidoreductase (complex I, CI) and ubiquinol-cytochrome c oxidoreductase (cytochrome b-c1 complex, complex III, CIII), resulting in different assemblies (supercomplex SCI(1)III(2)IV(1) and megacomplex MCI(2)III(2)IV(2)).

It is found in the mitochondrion inner membrane. The protein operates within energy metabolism; oxidative phosphorylation. Component of the cytochrome c oxidase, the last enzyme in the mitochondrial electron transport chain which drives oxidative phosphorylation. The respiratory chain contains 3 multisubunit complexes succinate dehydrogenase (complex II, CII), ubiquinol-cytochrome c oxidoreductase (cytochrome b-c1 complex, complex III, CIII) and cytochrome c oxidase (complex IV, CIV), that cooperate to transfer electrons derived from NADH and succinate to molecular oxygen, creating an electrochemical gradient over the inner membrane that drives transmembrane transport and the ATP synthase. Cytochrome c oxidase is the component of the respiratory chain that catalyzes the reduction of oxygen to water. Electrons originating from reduced cytochrome c in the intermembrane space (IMS) are transferred via the dinuclear copper A center (CU(A)) of subunit 2 and heme A of subunit 1 to the active site in subunit 1, a binuclear center (BNC) formed by heme A3 and copper B (CU(B)). The BNC reduces molecular oxygen to 2 water molecules using 4 electrons from cytochrome c in the IMS and 4 protons from the mitochondrial matrix. The chain is Cytochrome c oxidase subunit 5B heart, mitochondrial from Oncorhynchus mykiss (Rainbow trout).